Consider the following 162-residue polypeptide: uncharacterized protein (162 aa).

3 helical membrane-spanning segments follow: residues 7–27 (LIAD…IVGL), 51–71 (LSIL…YMIG), and 134–154 (TYVA…ITIG).

Belongs to the DedA family.

It localises to the cell membrane. This is an uncharacterized protein from Bacillus subtilis (strain 168).